The primary structure comprises 231 residues: Large ribosomal subunit protein uL1 (231 aa).

This sequence belongs to the universal ribosomal protein uL1 family. As to quaternary structure, part of the 50S ribosomal subunit.

Its function is as follows. Binds directly to 23S rRNA. The L1 stalk is quite mobile in the ribosome, and is involved in E site tRNA release. Protein L1 is also a translational repressor protein, it controls the translation of the L11 operon by binding to its mRNA. This Pseudomonas savastanoi pv. phaseolicola (strain 1448A / Race 6) (Pseudomonas syringae pv. phaseolicola (strain 1448A / Race 6)) protein is Large ribosomal subunit protein uL1.